Reading from the N-terminus, the 851-residue chain is MTSHYVIAIFALMSSCLATAGPEPGALCELSPVSASHPVQALMESFTVLSGCASRGTTGLPQEVHVLNLRTAGQGPGQLQREVTLHLNPISSVHIHHKSVVFLLNSPHPLVWHLKTERLATGVSRLFLVSEGSVVQFSSANFSLTAETEERNFPHGNEHLLNWARKEYGAVTSFTELKIARNIYIKVGEDQVFPPKCNIGKNFLSLNYLAEYLQPKAAEGCVMSSQPQNEEVHIIELITPNSNPYSAFQVDITIDIRPSQEDLEVVKNLILILKCKKSVNWVIKSFDVKGSLKIIAPNSIGFGKESERSMTMTKSIRDDIPSTQGNLVKWALDNGYSPITSYTMAPVANRFHLRLENNAEEMGDEEVHTIPPELRILLDPGALPALQNPPIRGGEGQNGGLPFPFPDISRRVWNEEGEDGLPRPKDPVIPSIQLFPGLREPEEVQGSVDIALSVKCDNEKMIVAVEKDSFQASGYSGMDVTLLDPTCKAKMNGTHFVLESPLNGCGTRPRWSALDGVVYYNSIVIQVPALGDSSGWPDGYEDLESGDNGFPGDMDEGDASLFTRPEIVVFNCSLQQVRNPSSFQEQPHGNITFNMELYNTDLFLVPSQGVFSVPENGHVYVEVSVTKAEQELGFAIQTCFISPYSNPDRMSHYTIIENICPKDESVKFYSPKRVHFPIPQADMDKKRFSFVFKPVFNTSLLFLQCELTLCTKMEKHPQKLPKCVPPDEACTSLDASIIWAMMQNKKTFTKPLAVIHHEAESKEKGPSMKEPNPISPPIFHGLDTLTVMGIAFAAFVIGALLTGALWYIYSHTGETAGRQQVPTSPPASENSSAAHSIGSTQSTPCSSSSTA.

An N-terminal signal peptide occupies residues 1–20 (MTSHYVIAIFALMSSCLATA). Residues 21-787 (GPEPGALCEL…IFHGLDTLTV (767 aa)) are Extracellular-facing. C52 and C197 are oxidised to a cystine. N-linked (GlcNAc...) asparagine glycosylation is found at N141 and N492. One can recognise a ZP domain in the interval 455–730 (KCDNEKMIVA…PKCVPPDEAC (276 aa)). Residues S534 and S545 are each glycosylated (O-linked (Xyl...) (glycosaminoglycan) serine). Residues N571, N590, and N697 are each glycosylated (N-linked (GlcNAc...) asparagine). Intrachain disulfides connect C639-C705, C660-C730, and C710-C723. The interval 737-751 (IIWAMMQNKKTFTKP) is interaction with TGF-beta ligand. Residues 788-809 (MGIAFAAFVIGALLTGALWYIY) form a helical membrane-spanning segment. At 810–851 (SHTGETAGRQQVPTSPPASENSSAAHSIGSTQSTPCSSSSTA) the chain is on the cytoplasmic side. Residues 816–851 (AGRQQVPTSPPASENSSAAHSIGSTQSTPCSSSSTA) form a disordered region. Residues 817-834 (GRQQVPTSPPASENSSAA) show a composition bias toward polar residues. The span at 836-851 (SIGSTQSTPCSSSSTA) shows a compositional bias: low complexity. T840 carries the phosphothreonine modification.

In terms of assembly, forms homodimers and homooligomers. Interacts with DYNLT4. Interacts with integrin ITGA5:ITGB1; this interaction promotes the internalization and trafficking of ITGA5:ITGB1 into endocytic vesicles. Interacts with TGFB1, BMP2, BMP5, BMP7 or GDF5 and inhibin A via the ligand binding domains. Interacts with ALK3/BMPR1A; this interaction results in the cell surface retention of BMPR1A. Interacts with ALK6/BMPR1B; this interaction enhances BMPR1B-mediated stimulation of the BMP signaling pathway. Interacts with the scaffolding protein beta-arrestin2/ARRB2; this interaction mediates internalization of TGFBR3 and thus regulates migration, actin cytoskeleton and activation of CDC42. As to quaternary structure, (Microbial infection) Interacts with human cytomegalovirus trimer complex composed of gH, gL, and gO; these interactions may promote HCMV cell entry in specific cell types. In terms of processing, extensively modified by glycosaminoglycan groups (GAG). Phosphorylated in the cytoplasmic domain by the type II receptor TGFBR2 at THR-840 to mediate recruitment of ARRB2 and subsequent internalization of TGFBR2 and TGFBR3.

It localises to the cell membrane. Its subcellular location is the secreted. It is found in the extracellular space. The protein localises to the extracellular matrix. In terms of biological role, cell surface receptor that regulates diverse cellular processes including cell proliferation, differentiation, migration, and apoptosis. Initiates BMP, inhibin, and TGF-beta signaling pathways by interacting with different ligands including TGFB1, BMP2, BMP5, BMP7 or GDF5. Alternatively, acts as a cell surface coreceptor for BMP ligands, serving to enhance ligand binding by differentially regulating BMPR1A/ALK3 and BMPR1B/ALK6 receptor trafficking. Promotes epithelial cell adhesion, focal adhesion formation and integrin signaling during epithelial cell spreading on fibronectin. By interacting with the scaffolding protein beta-arrestin2/ARRB2, regulates migration or actin cytoskeleton and promotes the activation of CDC42 as well as the inhibition of NF-kappa-B. In gonadotrope cells, acts as an inhibin A coreceptor and regulates follicle-stimulating hormone (FSH) levels and female fertility. Plays a role in the inhibition of directed and random cell migration in epithelial cells by altering the actin cytoskeletal organization. Participates in epithelial-mesenchymal transformation (EMT) upon binding to BMP2 or TGFB2, by activating the PAR6/SMURF1/RHOA pathway. Functionally, (Microbial infection) May act as a receptor for human cytomegalovirus in different cell types by interacting with HCMV trimer composed of GO, GH and GL. In Homo sapiens (Human), this protein is Transforming growth factor beta receptor type 3.